The sequence spans 519 residues: MNNLNKGDMRRSQYLMFFSNKKENKSYNVGQLVGLILGPLLFVLTLLLFQPDNLSDKGVFVLAITLWIATWWITEAIPIAATSLLPLILLPVGHVLNPEEVSAQYGNDIIFLFLGGFILAIAMERWNLHTRVALRIINTLGTSTGRILLGFMIATGFLSMFVSNTAAVMIMIPIGLAIIKEANELKHGDTKPESISKFEQALVLAIGYAGTIGGLGTLIGTPPLIILKGQYQSAFGEEISFAKWMIIGVPTVIVLLFLVWIYIRYIAFKHDMKTLPGGQDLIRKKLSELGKMKYEEKVVLIVFLLASFLWITREFLLKHWTFTSEVADGTIAMFISVLLFLIPAKNKEKHKRIIDWEVAKDLPWGVLILFGGGLALAKGISESGLANWLGEQLKLIEGVSPLVIVLVITIFVLFLTEITSNTATATMILPILATLSVAVNVHPLLLMVPAAMAANCAYMLPVGTPPNAIVFGTGKISIKKMASVGFWVNLLSIVVIVLVVYFLVPPVLGIDVTQPLPLK.

14 helical membrane-spanning segments follow: residues 29–49 (VGQL…LLLF), 59–79 (VFVL…AIPI), 103–123 (AQYG…AIAM), 136–156 (IINT…IATG), 159–179 (SMFV…LAII), 201–221 (ALVL…LIGT), 241–261 (FAKW…LVWI), 297–317 (KVVL…EFLL), 322–342 (FTSE…LFLI), 362–382 (LPWG…GISE), 395–415 (LIEG…VLFL), 428–448 (ILPI…LLMV), 451–471 (AMAA…AIVF), and 490–510 (LLSI…VLGI).

The protein belongs to the SLC13A/DASS transporter (TC 2.A.47) family. NADC subfamily.

Its subcellular location is the cell membrane. In terms of biological role, mediates the transport of dicarboxylates across the cytoplasmic membrane via a Na(+)-electrochemical gradient. This Staphylococcus saprophyticus subsp. saprophyticus (strain ATCC 15305 / DSM 20229 / NCIMB 8711 / NCTC 7292 / S-41) protein is Sodium-dependent dicarboxylate transporter SdcS (sdcS).